A 352-amino-acid polypeptide reads, in one-letter code: Ion-translocating oxidoreductase complex subunit D (352 aa).

Transmembrane regions (helical) follow at residues 20–40 (IMLL…WFFG), 42–62 (GTLV…ALVL), 78–109 (ALLT…VIIA), 123–143 (PAMI…TSWL), and 148–168 (IAVN…GHTA). FMN phosphoryl threonine is present on T187. A run of 5 helical transmembrane segments spans residues 214–234 (ILAG…GVWL), 242–262 (WHIP…GWLF), 267–287 (LAAP…FFIL), 301–321 (LIFG…GGYP), and 322–342 (DGVA…DYYT).

The protein belongs to the NqrB/RnfD family. The complex is composed of six subunits: RsxA, RsxB, RsxC, RsxD, RsxE and RsxG. Requires FMN as cofactor.

The protein resides in the cell inner membrane. Part of a membrane-bound complex that couples electron transfer with translocation of ions across the membrane. Required to maintain the reduced state of SoxR. This chain is Ion-translocating oxidoreductase complex subunit D, found in Escherichia coli O157:H7.